Reading from the N-terminus, the 93-residue chain is Putative septation protein SpoVG (93 aa).

The protein belongs to the SpoVG family.

Could be involved in septation. The polypeptide is Putative septation protein SpoVG (Fusobacterium nucleatum subsp. nucleatum (strain ATCC 25586 / DSM 15643 / BCRC 10681 / CIP 101130 / JCM 8532 / KCTC 2640 / LMG 13131 / VPI 4355)).